Reading from the N-terminus, the 2774-residue chain is Teneurin-2 (2774 aa).

The Teneurin N-terminal domain maps to 1–375 (MDVKDRRHRS…KPSKYCSWKC (375 aa)). Over 1-379 (MDVKDRRHRS…YCSWKCAALS (379 aa)) the chain is Cytoplasmic. A phosphoserine mark is found at serine 90 and serine 124. The segment at 111-271 (TGSDADSDTE…HHHSSANSLN (161 aa)) is disordered. Polar residues predominate over residues 141 to 155 (SSGLSSRENSALTLT). Threonine 155 bears the Phosphothreonine mark. Serine 157 is subject to Phosphoserine. Basic and acidic residues predominate over residues 159-168 (NENKSDDENG). Low complexity predominate over residues 176–188 (SPSLLPSAQLPSS). Over residues 202–211 (DSNTSHQIMD) the composition is skewed to polar residues. The segment covering 229 to 240 (SGPQQASSSGPP) has biased composition (low complexity). The helical transmembrane segment at 380-400 (AIAAALLLAILLAYFIAMHLL) threads the bilayer. At 401–2774 (GLNWQLQPAD…FLRQNEMGKR (2374 aa)) the chain is on the extracellular side. Asparagine 443 and asparagine 482 each carry an N-linked (GlcNAc...) asparagine glycan. 8 EGF-like domains span residues 575 to 603 (DCPRNCHGNGECVSGVCHCFPGFLGADCA), 598 to 634 (LGADCAKAACPVLCSGNGQYSKGTCQCYSGWKGAECD), 636 to 668 (PMNQCIDPSCGGHGSCIDGNCVCSAGYKGEHCE), 669 to 701 (EVDCLDPTCSSHGVCVNGECLCSPGWGGLNCEL), 702 to 735 (ARVQCPDQCSGHGTYLPDTGLCSCDPNWMGPDCS), 738 to 766 (VCSVDCGTHGVCIGGACRCEEGWTGAACD), 769 to 797 (VCHPRCIEHGTCKDGKCECREGWNGEHCT), and 808 to 841 (DGCPDLCNGNGRCTLGQNSWQCVCQTGWRGPGCN). 22 cysteine pairs are disulfide-bonded: cysteine 576–cysteine 586, cysteine 580–cysteine 591, cysteine 593–cysteine 602, cysteine 611–cysteine 622, cysteine 624–cysteine 633, cysteine 640–cysteine 651, cysteine 645–cysteine 656, cysteine 658–cysteine 667, cysteine 672–cysteine 683, cysteine 677–cysteine 688, cysteine 690–cysteine 699, cysteine 710–cysteine 723, cysteine 725–cysteine 734, cysteine 739–cysteine 749, cysteine 743–cysteine 754, cysteine 756–cysteine 765, cysteine 770–cysteine 780, cysteine 774–cysteine 785, cysteine 787–cysteine 796, cysteine 810–cysteine 820, cysteine 814–cysteine 829, and cysteine 831–cysteine 840. Residues asparagine 925, asparagine 948, and asparagine 1267 are each glycosylated (N-linked (GlcNAc...) asparagine). 5 NHL repeats span residues 1272–1316 (LELR…VKSL), 1342–1386 (ARCG…NGII), 1401–1452 (LSCD…IAGR), 1474–1501 (LESASAIAISHTGVLYITETDEKKINRL), and 1530–1573 (CYSG…VSKN). A YD 1 repeat occupies 1583-1602 (YEAASPGEQELYVFNADGIH). An N-linked (GlcNAc...) asparagine glycan is attached at asparagine 1616. YD repeat units follow at residues 1619–1639 (YSTDNDVTELIDNNGNSLKIR), 1682–1701 (YDGNTGLLATKSDETGWTTF), and 1702–1724 (YDYDHEGRLTNVTRPTGVVTSLH). N-linked (GlcNAc...) asparagine glycans are attached at residues asparagine 1712, asparagine 1749, asparagine 1773, asparagine 1807, and asparagine 1892. YD repeat units follow at residues 1895–1914 (YFFNGRLAGLQRGAMSERTD), 1936–1954 (YLDKSMVLLLQSQRQYIFE), 1955–1975 (YDSSDRLLAVTMPSVARHSMS), 1982–1999 (YIRNIYNPPESNASVIFD), 2000–2021 (YSDDGRILKTSFLGTGRQVFYK), 2022–2039 (YGKLSKLSEIVYDSTAVT), 2042–2062 (YDETTGVLKMVNLQSGGFSCT), 2065–2085 (YRKIGPLVDKQIYRFSEEGMV), 2093–2113 (YHDNSFRIASIKPVISETPLP), 2119–2136 (YDEISGKVEHFGKFGVIY), 2137–2163 (YDINQIITTAVMTLSKHFDTHGRIKEV), 2165–2178 (YEMFRSLMYWMTVQ), 2179–2202 (YDSMGRVIKRELKLGPYANTTKYT), 2205–2225 (YDGDGQLQSVAVNDRPTWRYS), 2226–2246 (YDLNGNLHLLNPGNSVRLMPL), 2248–2268 (YDLRDRITRLGDVQYKIDDDG), 2280–2300 (YNSKGLLTRAYNKASGWSVQY), and 2302–2322 (YDGVGRRASYKTNLGHHLQYF). Asparagine 1993 carries N-linked (GlcNAc...) asparagine glycosylation. Residue asparagine 2197 is glycosylated (N-linked (GlcNAc...) asparagine). A glycan (N-linked (GlcNAc...) asparagine) is linked at asparagine 2337. The stretch at 2348 to 2389 (YDLQGHLFAMESSSGEEYYVASDNTGTPLAVFSINGLMIKQL) is one YD 23 repeat. Asparagine 2648 carries an N-linked (GlcNAc...) asparagine glycan.

Belongs to the tenascin family. Teneurin subfamily. In terms of assembly, homodimer; disulfide-linked. Heterodimer with either TENM1 or TENM3. May also form heterodimer with TENM4. Isoform 2 (C-terminal globular domain) interacts with ADGRL1 isoform 2. Derives from the membrane form by proteolytic processing. In terms of processing, derives from the plasma membrane form by proteolytic cleavage and translocates to the nucleus. Homophilic binding of the C-terminal extracellular domain stimulates its proteolytic cleavage and release in the cytoplasmic. Is subjected to rapid degradation by the proteasome pathway. As to expression, highly expressed in heart, followed by brain, liver, kidney and fetal brain and weakly expressed in lung and testis. No expression was detected in skeletal muscle, pancreas, spleen, ovary and fetal liver.

It is found in the cell membrane. It localises to the presynaptic cell membrane. The protein localises to the postsynaptic cell membrane. The protein resides in the endoplasmic reticulum. Its subcellular location is the golgi apparatus. It is found in the synapse. It localises to the cell projection. The protein localises to the dendritic spine. The protein resides in the filopodium. Its subcellular location is the growth cone. It is found in the nucleus. It localises to the PML body. Its function is as follows. Involved in neural development, regulating the establishment of proper connectivity within the nervous system. Acts as a ligand of the ADGRL1 and ADGRL3 receptors that are expressed at the surface of adjacent cells. Promotes the formation of filopodia and enlarged growth cone in neuronal cells. Mediates axon guidance and homophilic and heterophilic cell-cell adhesion. May function as a cellular signal transducer. Acts as a ligand of the ADGRL1 receptor. Mediates axon guidance and heterophilic cell-cell adhesion. In terms of biological role, induces gene transcription inhibition. The polypeptide is Teneurin-2 (TENM2) (Homo sapiens (Human)).